The sequence spans 318 residues: Melanocyte-stimulating hormone receptor (318 aa).

Residues 1 to 37 (MPMQGAQRKLLGSLNSTPTATSNLGLAANRTGAPCLE) are Extracellular-facing. N-linked (GlcNAc...) asparagine glycosylation is present at N29. The chain crosses the membrane as a helical span at residues 38–63 (LPIPNGLFLSLGLVSLVENVLVVAAI). The Cytoplasmic portion of the chain corresponds to 64–72 (AKNRNLHSS). Residues 73-93 (MYCFICCLALSDLLVSGSNML) form a helical membrane-spanning segment. Residues 94-118 (ETAVILLLEAGVLATRASVVQQLHN) lie on the Extracellular side of the membrane. A helical membrane pass occupies residues 119–140 (TIDVLTCSSMLCSLCFLGAIAV). The Cytoplasmic portion of the chain corresponds to 141 to 163 (DRYISIFYALRYHSIMTLPRAQR). Residues 164–183 (AVAAIWVASVLSSTLFITYY) traverse the membrane as a helical segment. Topologically, residues 184 to 191 (DHAAVLLC) are extracellular. A helical transmembrane segment spans residues 192–211 (LMVFFLAMLVLMAVLYVHML). The Cytoplasmic portion of the chain corresponds to 212–240 (ARARQHAQGIIRLHKRQPPAHKGFGLRGA). The chain crosses the membrane as a helical span at residues 241-266 (ATLTILLGIFFLCWGPFFLCLTLVVF). At 267-279 (CPQHLTCNCIFKN) the chain is on the extracellular side. Residues 280–300 (FKVFLTLIICNTIIDPLIYAF) traverse the membrane as a helical segment. Residues 301–317 (RSQELRRMLKEVLGRGR) lie on the Cytoplasmic side of the membrane.

Belongs to the G-protein coupled receptor 1 family. In terms of assembly, interacts with MGRN1, but does not undergo MGRN1-mediated ubiquitination; this interaction competes with GNAS-binding and thus inhibits agonist-induced cAMP production. Interacts with OPN3; the interaction results in a decrease in MC1R-mediated cAMP signaling and ultimately a decrease in melanin production in melanocytes.

The protein resides in the cell membrane. In terms of biological role, receptor for MSH (alpha, beta and gamma) and ACTH. The activity of this receptor is mediated by G proteins which activate adenylate cyclase. Mediates melanogenesis, the production of eumelanin (black/brown) and phaeomelanin (red/yellow), via regulation of cAMP signaling in melanocytes. This Leontopithecus rosalia (Golden lion tamarin) protein is Melanocyte-stimulating hormone receptor (MC1R).